The sequence spans 122 residues: uncharacterized protein (122 aa).

3 helical membrane-spanning segments follow: residues 33 to 53 (ALGL…LTIP), 58 to 78 (VLGV…LLRW), and 97 to 117 (PGYL…LVVA).

The protein to E.coli YidH.

The protein resides in the cell membrane. This is an uncharacterized protein from Mycobacterium tuberculosis (strain CDC 1551 / Oshkosh).